A 660-amino-acid chain; its full sequence is Bifunctional polymyxin resistance protein ArnA (660 aa).

Positions methionine 1–leucine 304 are formyltransferase ArnAFT. Histidine 86 to isoleucine 88 is a (6R)-10-formyltetrahydrofolate binding site. Histidine 104 acts as the Proton donor; for formyltransferase activity in catalysis. (6R)-10-formyltetrahydrofolate contacts are provided by residues arginine 114 and valine 136–aspartate 140. Positions arginine 314–serine 660 are dehydrogenase ArnADH. Residues aspartate 347 and aspartate 368 to isoleucine 369 each bind NAD(+). Residues alanine 393, tyrosine 398, and threonine 432–serine 433 contribute to the UDP-alpha-D-glucuronate site. Glutamate 434 functions as the Proton acceptor; for decarboxylase activity in the catalytic mechanism. UDP-alpha-D-glucuronate is bound by residues arginine 460, asparagine 492, lysine 526 to arginine 535, and tyrosine 613. Arginine 619 serves as the catalytic Proton donor; for decarboxylase activity.

This sequence in the N-terminal section; belongs to the Fmt family. UDP-L-Ara4N formyltransferase subfamily. The protein in the C-terminal section; belongs to the NAD(P)-dependent epimerase/dehydratase family. UDP-glucuronic acid decarboxylase subfamily. Homohexamer, formed by a dimer of trimers.

It carries out the reaction UDP-alpha-D-glucuronate + NAD(+) = UDP-beta-L-threo-pentopyranos-4-ulose + CO2 + NADH. The catalysed reaction is UDP-4-amino-4-deoxy-beta-L-arabinose + (6R)-10-formyltetrahydrofolate = UDP-4-deoxy-4-formamido-beta-L-arabinose + (6S)-5,6,7,8-tetrahydrofolate + H(+). The protein operates within nucleotide-sugar biosynthesis; UDP-4-deoxy-4-formamido-beta-L-arabinose biosynthesis; UDP-4-deoxy-4-formamido-beta-L-arabinose from UDP-alpha-D-glucuronate: step 1/3. It functions in the pathway nucleotide-sugar biosynthesis; UDP-4-deoxy-4-formamido-beta-L-arabinose biosynthesis; UDP-4-deoxy-4-formamido-beta-L-arabinose from UDP-alpha-D-glucuronate: step 3/3. Its pathway is bacterial outer membrane biogenesis; lipopolysaccharide biosynthesis. Its function is as follows. Bifunctional enzyme that catalyzes the oxidative decarboxylation of UDP-glucuronic acid (UDP-GlcUA) to UDP-4-keto-arabinose (UDP-Ara4O) and the addition of a formyl group to UDP-4-amino-4-deoxy-L-arabinose (UDP-L-Ara4N) to form UDP-L-4-formamido-arabinose (UDP-L-Ara4FN). The modified arabinose is attached to lipid A and is required for resistance to polymyxin and cationic antimicrobial peptides. The polypeptide is Bifunctional polymyxin resistance protein ArnA (Escherichia coli O81 (strain ED1a)).